The following is a 437-amino-acid chain: GTPase Era, mitochondrial (437 aa).

The transit peptide at 1–20 directs the protein to the mitochondrion; it reads MAAPRRYFPGIVRALLGAWQ. Positions 112 to 330 constitute an Era-type G domain; the sequence is RVLRVVLLGA…QYLLTQAQPG (219 aa). The interval 120–127 is G1; the sequence is GAPNAGKS. 120 to 127 contributes to the GTP binding site; it reads GAPNAGKS. The interval 146–150 is G2; the sequence is HTTRC. The tract at residues 167-170 is G3; it reads DTPG. 167 to 171 provides a ligand contact to GTP; the sequence is DTPGI. Serine 173 is modified (phosphoserine). 236–239 serves as a coordination point for GTP; sequence NKVD. The G4 stretch occupies residues 236-239; that stretch reads NKVD. Positions 272-293 are disordered; the sequence is SRPSTHCPGPETEDPNTHAVRS. The G5 stretch occupies residues 308 to 310; sequence LSA. One can recognise a KH type-2 domain in the interval 360–437; it reads LPEEVPYSVQ…LLRLSVKLLK (78 aa).

The protein belongs to the TRAFAC class TrmE-Era-EngA-EngB-Septin-like GTPase superfamily. Era GTPase family.

The protein resides in the mitochondrion matrix. The protein localises to the mitochondrion inner membrane. In terms of biological role, probable GTPase that plays a role in the mitochondrial ribosomal small subunit assembly. Specifically binds the 12S mitochondrial rRNA (12S mt-rRNA) to a 33 nucleotide section delineating the 3' terminal stem-loop region. May act as a chaperone that protects the 12S mt-rRNA on the 28S mitoribosomal subunit during ribosomal small subunit assembly. The polypeptide is GTPase Era, mitochondrial (Eral1) (Rattus norvegicus (Rat)).